Here is a 249-residue protein sequence, read N- to C-terminus: General transcription factor IIF subunit 2 (249 aa).

Alanine 2 is subject to N-acetylalanine. N6-acetyllysine occurs at positions 22, 33, and 137. Serine 142 is modified (phosphoserine). Positions 227 and 229 each coordinate DNA. The residue at position 248 (serine 248) is a Phosphoserine.

The protein belongs to the TFIIF beta subunit family. Heterodimer of an alpha and a beta subunit. Interacts with HTATSF1 and GPBP1. Interacts with URI1. Interacts with GTF2B (via N-terminus); this interaction is inhibited in presence of GTF2F1. Part of TBP-based Pol II pre-initiation complex (PIC), in which Pol II core assembles with general transcription factors and other specific initiation factors including GTF2E1, GTF2E2, GTF2F1, GTF2F2, TCEA1, ERCC2, ERCC3, GTF2H2, GTF2H3, GTF2H4, GTF2H5, GTF2A1, GTF2A2, GTF2B and TBP; this large multi-subunit PIC complex mediates DNA unwinding and targets Pol II core to the transcription start site where the first phosphodiester bond forms.

It localises to the nucleus. In terms of biological role, TFIIF is a general transcription initiation factor that binds to RNA polymerase II and helps to recruit it to the initiation complex in collaboration with TFIIB. The protein is General transcription factor IIF subunit 2 (GTF2F2) of Bos taurus (Bovine).